Consider the following 103-residue polypeptide: Cobalt transport protein CbiN (103 aa).

2 consecutive transmembrane segments (helical) span residues 6-26 and 68-88; these read VLTN…PFFV and LLFA…LGYL.

This sequence belongs to the CbiN family. As to quaternary structure, forms an energy-coupling factor (ECF) transporter complex composed of an ATP-binding protein (A component, CbiO), a transmembrane protein (T component, CbiQ) and 2 possible substrate-capture proteins (S components, CbiM and CbiN) of unknown stoichimetry.

Its subcellular location is the cell membrane. Its pathway is cofactor biosynthesis; adenosylcobalamin biosynthesis. In terms of biological role, part of the energy-coupling factor (ECF) transporter complex CbiMNOQ involved in cobalt import. The chain is Cobalt transport protein CbiN from Clostridium perfringens (strain 13 / Type A).